We begin with the raw amino-acid sequence, 422 residues long: Steroid hormone receptor ERR1 (422 aa).

The tract at residues 1–67 is disordered; the sequence is MSSQVVGIEP…GAGPGEQGGG (67 aa). Phosphoserine occurs at positions 19 and 22. The segment covering 58–67 has biased composition (gly residues); it reads GAGPGEQGGG. Positions 76-151 form a DNA-binding region, nuclear receptor; sequence KRLCLVCGDV…VGMLKEGVRL (76 aa). 2 consecutive NR C4-type zinc fingers follow at residues 79–99 and 115–134; these read CLVC…CEAC and CPAS…CQAC. N6-acetyllysine; by PCAF/KAT2B occurs at positions 129, 138, 160, and 162. Residues Lys-189 and Lys-402 each participate in a glycyl lysine isopeptide (Lys-Gly) (interchain with G-Cter in SUMO2) cross-link. An NR LBD domain is found at 192–420; it reads PVNALVSHLL…KLFLEMLEAM (229 aa).

It belongs to the nuclear hormone receptor family. NR3 subfamily. Binds DNA as a monomer or a homodimer. Interacts (via the AF2 domain) with coactivator PPARGC1A (via the L3 motif); the interaction greatly enhances transcriptional activity of genes involved in energy metabolism. Interacts with PIAS4; the interaction enhances sumoylation. Interacts with MAPK15; promotes re-localization of ESRRA to the cytoplasm through a XPO1-dependent mechanism then inhibits ESRRA transcriptional activity. Post-translationally, phosphorylation on Ser-19 enhances sumoylation on Lys-14 increasing repression of transcriptional activity. In terms of processing, sumoylated with SUMO2. Main site is Lys-14 which is enhanced by phosphorylation on Ser-19, cofactor activation, and by interaction with PIAS4. Sumoylation enhances repression of transcriptional activity, but has no effect on subcellular location nor on DNA binding. Reversibly acetylated. Acetylation by PCAF/KAT2 at Lys-129, Lys-138, Lys-160 and Lys-162 and PCAF/KAT2 decreases transcriptional activity probably by inhibiting DNA-binding activity; deacetylation involves SIRT1 and HDAC8 and increases DNA-binding.

It localises to the nucleus. Its subcellular location is the cytoplasm. Functionally, binds to an ERR-alpha response element (ERRE) containing a single consensus half-site, 5'-TNAAGGTCA-3'. Can bind to the medium-chain acyl coenzyme A dehydrogenase (MCAD) response element NRRE-1 and may act as an important regulator of MCAD promoter. May function as a modulator of the estrogen signaling pathway in the uterus. Induces the expression of PERM1 in the skeletal muscle. The sequence is that of Steroid hormone receptor ERR1 (ESRRA) from Canis lupus familiaris (Dog).